The following is a 280-amino-acid chain: Fasciclin-like arabinogalactan protein 3 (280 aa).

The signal sequence occupies residues 1–24; that stretch reads MGLKVSSSLLCLTILLAVSSIVSA. An FAS1 domain is found at 25 to 169; that stretch reads VNITRVLEKY…LSVVQISMPI (145 aa). 3 N-linked (GlcNAc...) asparagine glycosylation sites follow: N26, N126, and N159. Pro residues predominate over residues 180-193; that stretch reads VPPPPPMSSPPAPS. A disordered region spans residues 180–262; the sequence is VPPPPPMSSP…EPPSSASNTG (83 aa). Positions 219–234 are enriched in low complexity; it reads APETAPASAPSESDSP. Residue S256 is the site of GPI-anchor amidated serine attachment. Residues 257–280 constitute a propeptide, removed in mature form; the sequence is SASNTGLSFGAVLVLGFVASFVGF.

This sequence belongs to the fasciclin-like AGP family.

Its subcellular location is the cell membrane. Its function is as follows. May be a cell surface adhesion protein. This is Fasciclin-like arabinogalactan protein 3 (FLA3) from Arabidopsis thaliana (Mouse-ear cress).